The chain runs to 506 residues: Apolipoprotein N-acyltransferase (506 aa).

The next 6 helical transmembrane spans lie at 26–46 (FAPYQIWLVALITPALLLILI), 66–86 (FASGISWVYVSIAGFGGMPLA), 89–109 (LFLMGALIAYLAIYPALFTWS), 113–133 (FFAKATLLNLLLAAPALWLIA), 166–186 (GVELLTLLLLVGAGAIAYAVI), and 192–212 (MLLIPTVLLSTGYGLSHWDWV). Residues 225–471 (IQGNVDQNLK…TAVLRAELTP (247 aa)) form the CN hydrolase domain. E264 (proton acceptor) is an active-site residue. K330 is an active-site residue. Catalysis depends on C382, which acts as the Nucleophile. A helical transmembrane segment spans residues 479–499 (HQLGSWPLYIWVALSLALAWW).

This sequence belongs to the CN hydrolase family. Apolipoprotein N-acyltransferase subfamily.

Its subcellular location is the cell inner membrane. It carries out the reaction N-terminal S-1,2-diacyl-sn-glyceryl-L-cysteinyl-[lipoprotein] + a glycerophospholipid = N-acyl-S-1,2-diacyl-sn-glyceryl-L-cysteinyl-[lipoprotein] + a 2-acyl-sn-glycero-3-phospholipid + H(+). It participates in protein modification; lipoprotein biosynthesis (N-acyl transfer). In terms of biological role, catalyzes the phospholipid dependent N-acylation of the N-terminal cysteine of apolipoprotein, the last step in lipoprotein maturation. This is Apolipoprotein N-acyltransferase from Vibrio vulnificus (strain CMCP6).